The primary structure comprises 481 residues: GDP-fucose protein O-fucosyltransferase 2 (481 aa).

The N-terminal stretch at 1 to 22 (MKGRAHIWVALLLACLPPRFRN) is a signal peptide. Residues 59 to 63 (GEGFN), 287 to 289 (HLR), D365, and 382 to 383 (RF) contribute to the GDP-beta-L-fucose site. The Proton acceptor role is filled by E60.

Belongs to the glycosyltransferase 68 family.

It localises to the endoplasmic reticulum. It carries out the reaction L-seryl-[protein] + GDP-beta-L-fucose = 3-O-(alpha-L-fucosyl)-L-seryl-[protein] + GDP + H(+). It catalyses the reaction L-threonyl-[protein] + GDP-beta-L-fucose = 3-O-(alpha-L-fucosyl)-L-threonyl-[protein] + GDP + H(+). The protein operates within protein modification; protein glycosylation. In terms of biological role, catalyzes the reaction that attaches fucose through an O-glycosidic linkage to a conserved serine or threonine residue in the consensus sequence C1-X-X-S/T-C2 of thrombospondin type I repeats (TSRs) where C1 and C2 are the first and second cysteines of the repeat, respectively. O-fucosylates sporozoite proteins CSP and TRAP. O-fucosylation regulates stability and intracellular trafficking of TRAP but not of CSP. Probably by regulating protein O-fucosylation, may play a role in parasite transmission to the mosquito vector and/or infection of the vertebrate host hepatocytes; however, POFUT2 involvement in transmission/infection is controversial. This chain is GDP-fucose protein O-fucosyltransferase 2, found in Plasmodium vivax (strain Salvador I).